The sequence spans 75 residues: Exodeoxyribonuclease 7 small subunit (75 aa).

The protein belongs to the XseB family. Heterooligomer composed of large and small subunits.

The protein resides in the cytoplasm. The catalysed reaction is Exonucleolytic cleavage in either 5'- to 3'- or 3'- to 5'-direction to yield nucleoside 5'-phosphates.. Functionally, bidirectionally degrades single-stranded DNA into large acid-insoluble oligonucleotides, which are then degraded further into small acid-soluble oligonucleotides. The sequence is that of Exodeoxyribonuclease 7 small subunit from Clostridium perfringens (strain ATCC 13124 / DSM 756 / JCM 1290 / NCIMB 6125 / NCTC 8237 / Type A).